Reading from the N-terminus, the 61-residue chain is Large ribosomal subunit protein bL32 (61 aa).

Residues 1 to 16 show a composition bias toward basic residues; the sequence is MAVPKRKTSPSKRGMR. Residues 1–33 form a disordered region; that stretch reads MAVPKRKTSPSKRGMRRSADGLKAPTYVEDKNS.

Belongs to the bacterial ribosomal protein bL32 family.

In Allorhizobium ampelinum (strain ATCC BAA-846 / DSM 112012 / S4) (Agrobacterium vitis (strain S4)), this protein is Large ribosomal subunit protein bL32.